The chain runs to 337 residues: MANSC domain-containing protein 4 (337 aa).

Residues 1–18 form the signal peptide; it reads MRAVELLLLLGLASMVHG. At 19-278 the chain is on the extracellular side; the sequence is LCSPTVFYRD…SSENEEPWDG (260 aa). The 81-residue stretch at 33 to 113 folds into the MANSC domain; that stretch reads RFPGMLLDLE…LEPGASAILY (81 aa). N-linked (GlcNAc...) asparagine glycosylation is found at N114, N227, and N251. 2 stretches are compositionally biased toward polar residues: residues 216–230 and 239–260; these read SPSTDFTHSPGNKTI and TRVSQVPSRSRLNISKPSVNKT. The tract at residues 216–277 is disordered; that stretch reads SPSTDFTHSP…HSSENEEPWD (62 aa). Residues 279–299 traverse the membrane as a helical segment; the sequence is APASAGVWLACVTLGAAVISL. At 300 to 337 the chain is on the cytoplasmic side; that stretch reads CCRVVLGTSRCCGKRQGWSHMGQRSASGCRRNTLKENS. Positions 314 to 337 are disordered; that stretch reads RQGWSHMGQRSASGCRRNTLKENS.

The protein localises to the membrane. The protein is MANSC domain-containing protein 4 (Mansc4) of Mus musculus (Mouse).